The sequence spans 354 residues: Malate dehydrogenase 2, peroxisomal (354 aa).

Residues 10 to 18 form a peroxisomal targeting signal PTS2 region; it reads RIARISAHL. NAD(+) is bound by residues 49 to 55 and aspartate 75; that span reads GAAGGIG. Substrate contacts are provided by arginine 122 and arginine 128. Residues asparagine 135 and 158–160 each bind NAD(+); that span reads ISN. Positions 160 and 194 each coordinate substrate. Residue histidine 218 is the Proton acceptor of the active site. NAD(+) is bound at residue methionine 269.

The protein belongs to the LDH/MDH superfamily. MDH type 1 family. In terms of assembly, homodimer. Expressed in rosette leaves.

It localises to the peroxisome. The catalysed reaction is (S)-malate + NAD(+) = oxaloacetate + NADH + H(+). Catalyzes a reversible NAD-dependent dehydrogenase reaction involved in central metabolism and redox homeostasis between organelle compartments. Peroxisomal NAD-dependent malate dehydrogenase involved in fatty acid beta-oxidation. Reoxidizes NADH from the beta-oxidation and provides NAD for the conversion of fatty acyl-CoA to acetyl-CoA. Does not participate directly in the glyoxylate cycle. Required for maintenance of photosynthetic rates under photorespiratory conditions, and carbon flow during photorespiration. Supplies NADH reductant to the peroxisomal hydroxypyruvate reductase (HPR), which reduces hydroxypyruvate into glycerate in the photorespiratory cycle. In Arabidopsis thaliana (Mouse-ear cress), this protein is Malate dehydrogenase 2, peroxisomal.